The chain runs to 484 residues: MERRMKAGYLDQQVPYTFSSKSPGNGSLREALIGPLGKLMDPGSLPPLDSEDLFQDLSHFQETWLAEAQVPDSDEQFVPDFHSENLAFHSPTTRIKKEPQSPRTDPALSCSRKPPLPYHHGEQCLYSSAYDPPRQIAIKSPAPGALGQSPLQPFPRAEQRNFLRSSGTSQPHPGHGYLGEHSSVFQQPLDICHSFTSQGGGREPLPAPYQHQLSEPCPPYPQQSFKQEYHDPLYEQAGQPAVDQGGVNGHRYPGAGVVIKQEQTDFAYDSDVTGCASMYLHTEGFSGPSPGDGAMGYGYEKPLRPFPDDVCVVPEKFEGDIKQEGVGAFREGPPYQRRGALQLWQFLVALLDDPTNAHFIAWTGRGMEFKLIEPEEVARLWGIQKNRPAMNYDKLSRSLRYYYEKGIMQKVAGERYVYKFVCEPEALFSLAFPDNQRPALKAEFDRPVSEEDTVPLSHLDESPAYLPELAGPAQPFGPKGGYSY.

K6 participates in a covalent cross-link: Glycyl lysine isopeptide (Lys-Gly) (interchain with G-Cter in SUMO2). Residues 90 to 115 (SPTTRIKKEPQSPRTDPALSCSRKPP) form a disordered region. K96 is covalently cross-linked (Glycyl lysine isopeptide (Lys-Gly) (interchain with G-Cter in SUMO)). S101 is modified (phosphoserine). A Glycyl lysine isopeptide (Lys-Gly) (interchain with G-Cter in SUMO2) cross-link involves residue K139. Phosphoserine occurs at positions 140, 149, and 214. Residues K226 and K260 each participate in a glycyl lysine isopeptide (Lys-Gly) (interchain with G-Cter in SUMO) cross-link. K322 participates in a covalent cross-link: Glycyl lysine isopeptide (Lys-Gly) (interchain with G-Cter in SUMO2). Positions 341-421 (LQLWQFLVAL…AGERYVYKFV (81 aa)) form a DNA-binding region, ETS.

This sequence belongs to the ETS family. Post-translationally, sumoylated; enhanced upon ERK/MAP kinase pathway activation, it positively regulates the transcriptional activator capacity. Sumoylation at Lys-96 probably requires phosphorylation at Ser-101. Transiently polysumoylated and desumoylated by SENP1. Sumoylation is a prerequisite to polyubiquitination which in turn increases proteasomal-mediated degradation. Probably polyubiquitinated by RNF4 and deubiquitinated by USP2. In terms of tissue distribution, expressed in keratinocytes.

It is found in the nucleus. Its function is as follows. Transcriptional activator. May play a role in keratinocyte differentiation. Functionally, (Microbial infection) Binds to the enhancer of the adenovirus E1A gene and acts as a transcriptional activator; the core-binding sequence is 5'-[AC]GGA[AT]GT-3'. This chain is ETS translocation variant 4 (ETV4), found in Homo sapiens (Human).